A 387-amino-acid polypeptide reads, in one-letter code: Acetylajmalan esterase (387 aa).

The signal sequence occupies residues methionine 1–glycine 22. Serine 36 (nucleophile) is an active-site residue. 5 N-linked (GlcNAc...) asparagine glycosylation sites follow: asparagine 98, asparagine 180, asparagine 199, asparagine 249, and asparagine 296. Residues aspartate 337 and histidine 340 contribute to the active site.

This sequence belongs to the 'GDSL' lipolytic enzyme family.

It carries out the reaction 17-O-acetylajmaline + H2O = ajmaline + acetate + H(+). The enzyme catalyses 17-O-acetylnorajmaline + H2O = norajmaline + acetate + H(+). It functions in the pathway alkaloid biosynthesis; ajmaline biosynthesis. Acetylesterase involved in the biosynthesis of ajmaline-type monoterpenoid indole alkaloids (MIAs) natural products, important plant-derived pharmaceuticals used in the therapy of heart disorders. Deacetylates 17-O-acetylajmaline and 17-O-acetylnorajmaline to produce ajmaline and norajmaline, but is inactive toward other acetylated alkaloids. This chain is Acetylajmalan esterase, found in Rauvolfia serpentina (Serpentine wood).